We begin with the raw amino-acid sequence, 325 residues long: DNA repair and recombination protein RadA (325 aa).

107-114 (GEFGSGKT) contacts ATP.

Belongs to the eukaryotic RecA-like protein family.

Its function is as follows. Involved in DNA repair and in homologous recombination. Binds and assemble on single-stranded DNA to form a nucleoprotein filament. Hydrolyzes ATP in a ssDNA-dependent manner and promotes DNA strand exchange between homologous DNA molecules. The protein is DNA repair and recombination protein RadA of Methanosarcina barkeri (strain Fusaro / DSM 804).